The chain runs to 520 residues: D-aminopeptidase (520 aa).

The active-site Nucleophile is S62. The active-site Proton donor/acceptor is the K65. Positions 477–487 (QRSMDAPSPGE) are important for specificity. D481 contacts substrate.

Belongs to the peptidase S12 family. Homodimer.

The catalysed reaction is Release of an N-terminal D-amino acid from a peptide, Xaa-|-Yaa-, in which Xaa is preferably D-Ala, D-Ser or D-Thr. D-amino acid amides and methyl esters also are hydrolyzed, as is glycine amide.. Its activity is regulated as follows. Inhibited by beta-lactam compounds such as 6-aminopenicillic acid, 7-aminocephalosporanic acid, benzylpenicillin and ampicillin. Inhibited by p-chloromercuribenzoate. Functionally, hydrolyzes N-terminal residues in D-amino acid-containing peptides. This chain is D-aminopeptidase, found in Brucella anthropi (strain ATCC 49188 / DSM 6882 / CCUG 24695 / JCM 21032 / LMG 3331 / NBRC 15819 / NCTC 12168 / Alc 37) (Ochrobactrum anthropi).